A 330-amino-acid polypeptide reads, in one-letter code: 7,8-didemethyl-8-hydroxy-5-deazariboflavin synthase (330 aa).

The Radical SAM core domain occupies 13–253 (VTFSKNAFIP…EDISIQVPPN (241 aa)). The [4Fe-4S] cluster site is built by C27, C31, and C34.

This sequence belongs to the radical SAM superfamily. CofG family. As to quaternary structure, consists of two subunits, CofG and CofH. Requires [4Fe-4S] cluster as cofactor.

It carries out the reaction 5-amino-5-(4-hydroxybenzyl)-6-(D-ribitylimino)-5,6-dihydrouracil + S-adenosyl-L-methionine = 7,8-didemethyl-8-hydroxy-5-deazariboflavin + 5'-deoxyadenosine + L-methionine + NH4(+) + H(+). It participates in cofactor biosynthesis; coenzyme F0 biosynthesis. Catalyzes the radical-mediated synthesis of 7,8-didemethyl-8-hydroxy-5-deazariboflavin from 5-amino-5-(4-hydroxybenzyl)-6-(D-ribitylimino)-5,6-dihydrouracil. The chain is 7,8-didemethyl-8-hydroxy-5-deazariboflavin synthase from Methanococcus maripaludis (strain DSM 14266 / JCM 13030 / NBRC 101832 / S2 / LL).